A 531-amino-acid polypeptide reads, in one-letter code: Probable calcium-binding mitochondrial carrier F17E5.2 (531 aa).

EF-hand domains are found at residues 70 to 105 (EKEKKIRDMYDRLDADNDGSIDIRDLTQALSLQAHI), 106 to 135 (PASVAPKLLERMKSEHSDRVTYADFTNYVI), 136 to 171 (AHEARLAEVFDKIDLNSDGEVDMAEIKSYCKEMGVN), and 172 to 207 (LDDQKAMSIVKKMDQSGSSSVNLNEFQDFMLLYPST). 5 residues coordinate Ca(2+): aspartate 83, aspartate 85, aspartate 87, serine 89, and aspartate 94. Ca(2+) contacts are provided by aspartate 149, asparagine 151, aspartate 153, glutamate 155, and glutamate 160. Solcar repeat units lie at residues 242–328 (GVWW…IKRW), 338–424 (LSTI…LKSM), and 435–525 (PGVL…VRKQ). The next 6 membrane-spanning stretches (helical) occupy residues 248–265 (LVAGGVAGAMSRTCTAPF), 303–322 (GNGINVIKIAPESAMKFMCY), 348–361 (SSAGAISQTAIYPM), 399–418 (GYLPNLLGIIPYAGIDLTVY), 441–458 (LACGTCSSTCGQLASYPL), and 500–517 (GITPNFMKVIPAVSISYV).

The protein belongs to the mitochondrial carrier (TC 2.A.29) family.

It is found in the mitochondrion inner membrane. Functionally, calcium-dependent mitochondrial solute carrier. The sequence is that of Probable calcium-binding mitochondrial carrier F17E5.2 from Caenorhabditis elegans.